The following is a 485-amino-acid chain: UDP-N-acetylmuramate--L-alanine ligase (485 aa).

127–133 contributes to the ATP binding site; it reads GTHGKTT.

It belongs to the MurCDEF family.

The protein localises to the cytoplasm. It catalyses the reaction UDP-N-acetyl-alpha-D-muramate + L-alanine + ATP = UDP-N-acetyl-alpha-D-muramoyl-L-alanine + ADP + phosphate + H(+). It functions in the pathway cell wall biogenesis; peptidoglycan biosynthesis. In terms of biological role, cell wall formation. The polypeptide is UDP-N-acetylmuramate--L-alanine ligase (Shewanella frigidimarina (strain NCIMB 400)).